A 471-amino-acid chain; its full sequence is 3-isopropylmalate dehydratase large subunit (471 aa).

[4Fe-4S] cluster is bound by residues cysteine 347, cysteine 409, and cysteine 412.

This sequence belongs to the aconitase/IPM isomerase family. LeuC type 1 subfamily. In terms of assembly, heterodimer of LeuC and LeuD. The cofactor is [4Fe-4S] cluster.

It catalyses the reaction (2R,3S)-3-isopropylmalate = (2S)-2-isopropylmalate. The protein operates within amino-acid biosynthesis; L-leucine biosynthesis; L-leucine from 3-methyl-2-oxobutanoate: step 2/4. Catalyzes the isomerization between 2-isopropylmalate and 3-isopropylmalate, via the formation of 2-isopropylmaleate. This chain is 3-isopropylmalate dehydratase large subunit, found in Buchnera aphidicola subsp. Rhopalosiphum padi.